We begin with the raw amino-acid sequence, 265 residues long: Phosphonates import ATP-binding protein PhnC 1 (265 aa).

The region spanning 3 to 247 (LRLSAIELRH…HLDTLYANEQ (245 aa)) is the ABC transporter domain. 36–43 (GPSGAGKT) is a binding site for ATP.

It belongs to the ABC transporter superfamily. Phosphonates importer (TC 3.A.1.9.1) family. As to quaternary structure, the complex is composed of two ATP-binding proteins (PhnC), two transmembrane proteins (PhnE) and a solute-binding protein (PhnD).

The protein localises to the cell inner membrane. It catalyses the reaction phosphonate(out) + ATP + H2O = phosphonate(in) + ADP + phosphate + H(+). Part of the ABC transporter complex PhnCDE involved in phosphonates import. Responsible for energy coupling to the transport system. This chain is Phosphonates import ATP-binding protein PhnC 1, found in Pseudomonas syringae pv. syringae (strain B728a).